The chain runs to 365 residues: UDP-N-acetylglucosamine--N-acetylmuramyl-(pentapeptide) pyrophosphoryl-undecaprenol N-acetylglucosamine transferase (365 aa).

Residues 10-12 (TGG), Asn128, Arg170, Ser199, Ile250, and Gln295 contribute to the UDP-N-acetyl-alpha-D-glucosamine site.

The protein belongs to the glycosyltransferase 28 family. MurG subfamily.

The protein localises to the cell inner membrane. It carries out the reaction di-trans,octa-cis-undecaprenyl diphospho-N-acetyl-alpha-D-muramoyl-L-alanyl-D-glutamyl-meso-2,6-diaminopimeloyl-D-alanyl-D-alanine + UDP-N-acetyl-alpha-D-glucosamine = di-trans,octa-cis-undecaprenyl diphospho-[N-acetyl-alpha-D-glucosaminyl-(1-&gt;4)]-N-acetyl-alpha-D-muramoyl-L-alanyl-D-glutamyl-meso-2,6-diaminopimeloyl-D-alanyl-D-alanine + UDP + H(+). It participates in cell wall biogenesis; peptidoglycan biosynthesis. Its function is as follows. Cell wall formation. Catalyzes the transfer of a GlcNAc subunit on undecaprenyl-pyrophosphoryl-MurNAc-pentapeptide (lipid intermediate I) to form undecaprenyl-pyrophosphoryl-MurNAc-(pentapeptide)GlcNAc (lipid intermediate II). The chain is UDP-N-acetylglucosamine--N-acetylmuramyl-(pentapeptide) pyrophosphoryl-undecaprenol N-acetylglucosamine transferase from Prosthecochloris aestuarii (strain DSM 271 / SK 413).